The following is a 274-amino-acid chain: Rhamnulose-1-phosphate aldolase (274 aa).

Residue glutamate 117 is part of the active site. Positions 141, 143, and 212 each coordinate Zn(2+).

The protein belongs to the aldolase class II family. RhaD subfamily. Homotetramer. Zn(2+) serves as cofactor.

It is found in the cytoplasm. It carries out the reaction L-rhamnulose 1-phosphate = (S)-lactaldehyde + dihydroxyacetone phosphate. It participates in carbohydrate degradation; L-rhamnose degradation; glycerone phosphate from L-rhamnose: step 3/3. Its function is as follows. Catalyzes the reversible cleavage of L-rhamnulose-1-phosphate to dihydroxyacetone phosphate (DHAP) and L-lactaldehyde. The sequence is that of Rhamnulose-1-phosphate aldolase from Escherichia coli (strain K12 / MC4100 / BW2952).